A 548-amino-acid chain; its full sequence is ATP synthase subunit alpha (548 aa).

Position 172-179 (172-179 (GDRKTGKT)) interacts with ATP. The disordered stretch occupies residues 511–548 (FETTSGESVVPDENVEAMSEDDVEKESVKVRKPAPKKK). Over residues 523–534 (ENVEAMSEDDVE) the composition is skewed to acidic residues.

This sequence belongs to the ATPase alpha/beta chains family. As to quaternary structure, F-type ATPases have 2 components, CF(1) - the catalytic core - and CF(0) - the membrane proton channel. CF(1) has five subunits: alpha(3), beta(3), gamma(1), delta(1), epsilon(1). CF(0) has three main subunits: a(1), b(2) and c(9-12). The alpha and beta chains form an alternating ring which encloses part of the gamma chain. CF(1) is attached to CF(0) by a central stalk formed by the gamma and epsilon chains, while a peripheral stalk is formed by the delta and b chains.

The protein resides in the cell membrane. It catalyses the reaction ATP + H2O + 4 H(+)(in) = ADP + phosphate + 5 H(+)(out). Produces ATP from ADP in the presence of a proton gradient across the membrane. The alpha chain is a regulatory subunit. The chain is ATP synthase subunit alpha from Mycobacterium sp. (strain JLS).